Reading from the N-terminus, the 385-residue chain is Phosphatidate cytidylyltransferase, mitochondrial (385 aa).

It belongs to the TAM41 family. Mg(2+) serves as cofactor. Co(2+) is required as a cofactor. The cofactor is Cu(2+).

It localises to the mitochondrion inner membrane. It catalyses the reaction a 1,2-diacyl-sn-glycero-3-phosphate + CTP + H(+) = a CDP-1,2-diacyl-sn-glycerol + diphosphate. It participates in phospholipid metabolism; CDP-diacylglycerol biosynthesis; CDP-diacylglycerol from sn-glycerol 3-phosphate: step 3/3. Its function is as follows. Catalyzes the formation of CDP-diacylglycerol (CDP-DAG) from phosphatidic acid (PA) in the mitochondrial inner membrane. Required for the biosynthesis of the dimeric phospholipid cardiolipin, which stabilizes supercomplexes of the mitochondrial respiratory chain in the mitochondrial inner membrane. The protein is Phosphatidate cytidylyltransferase, mitochondrial (TAM41) of Saccharomyces cerevisiae (strain ATCC 204508 / S288c) (Baker's yeast).